A 208-amino-acid polypeptide reads, in one-letter code: Protein GrpE (208 aa).

A compositionally biased stretch (basic and acidic residues) spans 1 to 12 (MTNKDESVEKNT). Residues 1 to 59 (MTNKDESVEKNTESTVEETNIKQNIDDSVEQAEESKGHLQDEAIEETSDENVIEEIDPK) are disordered. Residues 13 to 23 (ESTVEETNIKQ) are compositionally biased toward polar residues. The span at 42–55 (EAIEETSDENVIEE) shows a compositional bias: acidic residues.

The protein belongs to the GrpE family. In terms of assembly, homodimer.

The protein localises to the cytoplasm. In terms of biological role, participates actively in the response to hyperosmotic and heat shock by preventing the aggregation of stress-denatured proteins, in association with DnaK and GrpE. It is the nucleotide exchange factor for DnaK and may function as a thermosensor. Unfolded proteins bind initially to DnaJ; upon interaction with the DnaJ-bound protein, DnaK hydrolyzes its bound ATP, resulting in the formation of a stable complex. GrpE releases ADP from DnaK; ATP binding to DnaK triggers the release of the substrate protein, thus completing the reaction cycle. Several rounds of ATP-dependent interactions between DnaJ, DnaK and GrpE are required for fully efficient folding. The sequence is that of Protein GrpE from Staphylococcus aureus (strain Mu3 / ATCC 700698).